Reading from the N-terminus, the 63-residue chain is Large ribosomal subunit protein uL29 (63 aa).

It belongs to the universal ribosomal protein uL29 family.

The protein is Large ribosomal subunit protein uL29 of Bordetella petrii (strain ATCC BAA-461 / DSM 12804 / CCUG 43448).